The sequence spans 217 residues: Elongation factor Ts (217 aa).

Residues 82–85 (TDFV) form an involved in Mg(2+) ion dislocation from EF-Tu region.

The protein belongs to the EF-Ts family.

The protein resides in the cytoplasm. Its function is as follows. Associates with the EF-Tu.GDP complex and induces the exchange of GDP to GTP. It remains bound to the aminoacyl-tRNA.EF-Tu.GTP complex up to the GTP hydrolysis stage on the ribosome. This chain is Elongation factor Ts, found in Desulfitobacterium hafniense (strain DSM 10664 / DCB-2).